Here is a 221-residue protein sequence, read N- to C-terminus: Catechol O-methyltransferase (221 aa).

S-adenosyl-L-methionine contacts are provided by Val41, Gly65, Leu67, Ser71, Glu89, His94, Ala118, and Asp139. Residues Asp139, Asp165, and Asn166 each contribute to the Mg(2+) site.

This sequence belongs to the class I-like SAM-binding methyltransferase superfamily. Cation-dependent O-methyltransferase family. As to quaternary structure, homodimer. Mg(2+) is required as a cofactor.

It carries out the reaction a catechol + S-adenosyl-L-methionine = a guaiacol + S-adenosyl-L-homocysteine + H(+). Its activity is regulated as follows. The metal ion affects the meta and para-regiospecificity of the enzyme as well as the enzyme activity and thermal stability. Its function is as follows. Catechol O-methyltransferase that can use various catechol-like compounds. Can produce vanillic acid (meta-form) and iso-vanillic acid (para-form) from protocatechuic acid (PCA). Does not have a regiospecificity, and produces the meta- and para-forms of the products in equal proportion. This Niastella koreensis (strain DSM 17620 / KACC 11465 / NBRC 106392 / GR20-10) protein is Catechol O-methyltransferase.